The sequence spans 303 residues: E3 ubiquitin-protein ligase SINA-like 3 (303 aa).

The interval 1–30 is disordered; sequence MENITNNSERSLDRPKRQRPVSMENVGGTA. The RING-type zinc-finger motif lies at 49 to 85; that stretch reads CPICYHKLGAPIYQCDNGHIACSSCCKKVKYKCPYCS. The interval 99 to 286 is SBD; the sequence is IVEAVVVSCP…MSIPYYLLDE (188 aa). Residues 102–162 form an SIAH-type zinc finger; sequence AVVVSCPNAK…LYRHYHAEHK (61 aa). Positions 107, 114, 128, 132, 139, 144, 156, and 161 each coordinate Zn(2+).

Belongs to the SINA (Seven in absentia) family.

It catalyses the reaction S-ubiquitinyl-[E2 ubiquitin-conjugating enzyme]-L-cysteine + [acceptor protein]-L-lysine = [E2 ubiquitin-conjugating enzyme]-L-cysteine + N(6)-ubiquitinyl-[acceptor protein]-L-lysine.. It participates in protein modification; protein ubiquitination. Functionally, E3 ubiquitin-protein ligase that mediates ubiquitination and subsequent proteasomal degradation of target proteins. E3 ubiquitin ligases accept ubiquitin from an E2 ubiquitin-conjugating enzyme in the form of a thioester and then directly transfers the ubiquitin to targeted substrates. It probably triggers the ubiquitin-mediated degradation of different substrates. In Arabidopsis thaliana (Mouse-ear cress), this protein is E3 ubiquitin-protein ligase SINA-like 3.